The following is a 250-amino-acid chain: 3-deoxy-manno-octulosonate cytidylyltransferase (250 aa).

Belongs to the KdsB family.

The protein localises to the cytoplasm. It carries out the reaction 3-deoxy-alpha-D-manno-oct-2-ulosonate + CTP = CMP-3-deoxy-beta-D-manno-octulosonate + diphosphate. It functions in the pathway nucleotide-sugar biosynthesis; CMP-3-deoxy-D-manno-octulosonate biosynthesis; CMP-3-deoxy-D-manno-octulosonate from 3-deoxy-D-manno-octulosonate and CTP: step 1/1. Its pathway is bacterial outer membrane biogenesis; lipopolysaccharide biosynthesis. In terms of biological role, activates KDO (a required 8-carbon sugar) for incorporation into bacterial lipopolysaccharide in Gram-negative bacteria. This is 3-deoxy-manno-octulosonate cytidylyltransferase from Sinorhizobium medicae (strain WSM419) (Ensifer medicae).